Reading from the N-terminus, the 259-residue chain is Mediator of RNA polymerase II transcription subunit 7 (259 aa).

Disordered stretches follow at residues Met-1 to Pro-52, Thr-99 to Pro-118, and Gly-223 to Ile-242. Positions Glu-31–Arg-44 are enriched in basic and acidic residues. Positions Thr-230–Ile-242 are enriched in basic and acidic residues.

Belongs to the Mediator complex subunit 7 family. Component of the Mediator complex.

It is found in the nucleus. Component of the Mediator complex, a coactivator involved in the regulated transcription of nearly all RNA polymerase II-dependent genes. Mediator functions as a bridge to convey information from gene-specific regulatory proteins to the basal RNA polymerase II transcription machinery. Mediator is recruited to promoters by direct interactions with regulatory proteins and serves as a scaffold for the assembly of a functional preinitiation complex with RNA polymerase II and the general transcription factors. This is Mediator of RNA polymerase II transcription subunit 7 (med7) from Emericella nidulans (strain FGSC A4 / ATCC 38163 / CBS 112.46 / NRRL 194 / M139) (Aspergillus nidulans).